A 156-amino-acid chain; its full sequence is ATP synthase subunit b (156 aa).

A helical membrane pass occupies residues 7–29 (LLGQAISFLLFVWFCMKFVWPPL).

The protein belongs to the ATPase B chain family. As to quaternary structure, F-type ATPases have 2 components, F(1) - the catalytic core - and F(0) - the membrane proton channel. F(1) has five subunits: alpha(3), beta(3), gamma(1), delta(1), epsilon(1). F(0) has three main subunits: a(1), b(2) and c(10-14). The alpha and beta chains form an alternating ring which encloses part of the gamma chain. F(1) is attached to F(0) by a central stalk formed by the gamma and epsilon chains, while a peripheral stalk is formed by the delta and b chains.

It is found in the cell inner membrane. F(1)F(0) ATP synthase produces ATP from ADP in the presence of a proton or sodium gradient. F-type ATPases consist of two structural domains, F(1) containing the extramembraneous catalytic core and F(0) containing the membrane proton channel, linked together by a central stalk and a peripheral stalk. During catalysis, ATP synthesis in the catalytic domain of F(1) is coupled via a rotary mechanism of the central stalk subunits to proton translocation. Functionally, component of the F(0) channel, it forms part of the peripheral stalk, linking F(1) to F(0). This Shewanella pealeana (strain ATCC 700345 / ANG-SQ1) protein is ATP synthase subunit b.